Consider the following 468-residue polypeptide: Probable protein phosphatase 2C 52 (468 aa).

The region spanning serine 67–leucine 372 is the PPM-type phosphatase domain. 4 residues coordinate Mn(2+): aspartate 102, glycine 103, aspartate 317, and aspartate 363. A compositionally biased stretch (polar residues) spans arginine 413 to glutamate 429. A disordered region spans residues arginine 413–asparagine 442.

It belongs to the PP2C family. The cofactor is Mg(2+). It depends on Mn(2+) as a cofactor.

The catalysed reaction is O-phospho-L-seryl-[protein] + H2O = L-seryl-[protein] + phosphate. The enzyme catalyses O-phospho-L-threonyl-[protein] + H2O = L-threonyl-[protein] + phosphate. In Arabidopsis thaliana (Mouse-ear cress), this protein is Probable protein phosphatase 2C 52.